The primary structure comprises 727 residues: Rho-related BTB domain-containing protein 2 (727 aa).

The rho-like stretch occupies residues 1–210 (MDSDMDYERP…DNAIRAALIS (210 aa)). GTP contacts are provided by residues 21 to 28 (GDNAVGKT), 84 to 88 (DTFGD), and 140 to 143 (CQLD). BTB domains lie at 266–442 (ADVI…DENE) and 500–567 (SDVT…TSSP). A disordered region spans residues 304–333 (ELGGPSEPGGTHPEDHQGHSDQHHHHHHHH). Residues 315 to 324 (HPEDHQGHSD) are compositionally biased toward basic and acidic residues. The tract at residues 703–727 (FWNSPSSPSSSAASSSSPSSSSAVV) is disordered. The segment covering 706-727 (SPSSPSSSAASSSSPSSSSAVV) has biased composition (low complexity).

It belongs to the small GTPase superfamily. Rho family. As to quaternary structure, interacts with HSP90AA1 and HSP90AB1. Forms a complex with CUL3 and RBX1. Interacts (via BTB 1 domain) with CUL3. Interacts with MSI2. In terms of processing, autoubiquitinated by RHOBTB2-CUL3-RBX1 ubiquitin ligase complex. In terms of tissue distribution, ubiquitous, with highest levels in neural tissues. Expression is also detected in fetal lung, heart, and brain.

Regulator of cell proliferation and apoptosis. It likely functions as a substrate-adapter that recruits key substrates, e.g. MSI2, to CUL3-based ubiquitin ligase complexes for degradation. Required for MSI2 ubiquitination and degradation. The protein is Rho-related BTB domain-containing protein 2 (RHOBTB2) of Homo sapiens (Human).